A 192-amino-acid chain; its full sequence is Fe/S biogenesis protein NfuA (192 aa).

Residues cysteine 150 and cysteine 153 each coordinate [4Fe-4S] cluster.

The protein belongs to the NfuA family. In terms of assembly, homodimer. [4Fe-4S] cluster serves as cofactor.

Involved in iron-sulfur cluster biogenesis. Binds a 4Fe-4S cluster, can transfer this cluster to apoproteins, and thereby intervenes in the maturation of Fe/S proteins. Could also act as a scaffold/chaperone for damaged Fe/S proteins. This chain is Fe/S biogenesis protein NfuA, found in Ruthia magnifica subsp. Calyptogena magnifica.